Reading from the N-terminus, the 199-residue chain is Protein GrpE (199 aa).

Over residues 1–17 the composition is skewed to polar residues; that stretch reads MSDSDNNTKSQQNNPTQ. A disordered region spans residues 1–36; it reads MSDSDNNTKSQQNNPTQTDEKSGEEIQSNQKPQRKF.

The protein belongs to the GrpE family. As to quaternary structure, homodimer.

The protein resides in the cytoplasm. Functionally, participates actively in the response to hyperosmotic and heat shock by preventing the aggregation of stress-denatured proteins, in association with DnaK and GrpE. It is the nucleotide exchange factor for DnaK and may function as a thermosensor. Unfolded proteins bind initially to DnaJ; upon interaction with the DnaJ-bound protein, DnaK hydrolyzes its bound ATP, resulting in the formation of a stable complex. GrpE releases ADP from DnaK; ATP binding to DnaK triggers the release of the substrate protein, thus completing the reaction cycle. Several rounds of ATP-dependent interactions between DnaJ, DnaK and GrpE are required for fully efficient folding. The protein is Protein GrpE of Ehrlichia canis (strain Jake).